The sequence spans 97 residues: Aspartyl/glutamyl-tRNA(Asn/Gln) amidotransferase subunit C (97 aa).

The protein belongs to the GatC family. In terms of assembly, heterotrimer of A, B and C subunits.

The enzyme catalyses L-glutamyl-tRNA(Gln) + L-glutamine + ATP + H2O = L-glutaminyl-tRNA(Gln) + L-glutamate + ADP + phosphate + H(+). It carries out the reaction L-aspartyl-tRNA(Asn) + L-glutamine + ATP + H2O = L-asparaginyl-tRNA(Asn) + L-glutamate + ADP + phosphate + 2 H(+). Its function is as follows. Allows the formation of correctly charged Asn-tRNA(Asn) or Gln-tRNA(Gln) through the transamidation of misacylated Asp-tRNA(Asn) or Glu-tRNA(Gln) in organisms which lack either or both of asparaginyl-tRNA or glutaminyl-tRNA synthetases. The reaction takes place in the presence of glutamine and ATP through an activated phospho-Asp-tRNA(Asn) or phospho-Glu-tRNA(Gln). The chain is Aspartyl/glutamyl-tRNA(Asn/Gln) amidotransferase subunit C from Clostridium botulinum (strain Eklund 17B / Type B).